We begin with the raw amino-acid sequence, 1129 residues long: Egg-laying defective protein 27 (1129 aa).

A compositionally biased stretch (polar residues) spans 1–11 (MSRFDSQCSSE). The tract at residues 1 to 43 (MSRFDSQCSSEDVNKEDECVPSSSEDSQDGVSSPMENDDEPEF) is disordered. Low complexity predominate over residues 22 to 33 (SSSEDSQDGVSS). Residues 87 to 223 (TLYRLRDSVF…QDSTKLASTH (137 aa)) enclose the BAH domain. One can recognise an ELM2 domain in the interval 224–327 (YAIRVGTSFQ…DALSELNAND (104 aa)). In terms of domain architecture, SANT spans 332 to 384 (TDVDNMTQDDAKKFAKGIKQLGKNFSRIHRELLPHHSREQLVSYYYLWKKTPE). Residues 388–434 (PKQAARRVNPTSIKRPTKEKVKASRPTSTEYLDFDSASESDVENNGP) are disordered. Residues 419 to 429 (LDFDSASESDV) are compositionally biased toward acidic residues. The segment at 439–485 (CHHCYGAESKDWHHANGLLLCTDCRLHYKKYGQLRQIANRPSQVPAC) adopts a GATA-type; atypical zinc-finger fold. Disordered stretches follow at residues 488-636 (KRSN…DPMP), 693-717 (RDET…SPED), 790-814 (QQNQ…QQAQ), 899-950 (MIAE…HAAA), and 982-1040 (MAAQ…REHA). Polar residues-rich tracts occupy residues 525–545 (PSTV…TKKL) and 561–573 (VINN…SSEE). Composition is skewed to acidic residues over residues 613–634 (SYDD…DDDP) and 705–717 (KDDE…SPED). Residues 899-914 (MIAEQQQQQRHAAAQQ) are compositionally biased toward low complexity. Residues 915-932 (LREREQREQRERERERQH) show a composition bias toward basic and acidic residues. 2 stretches are compositionally biased toward low complexity: residues 933–950 (QQQA…HAAA) and 983–999 (AAQQ…AQAQ). A compositionally biased stretch (basic and acidic residues) spans 1000-1040 (RDQERERREREAREREAAREREREQAAREAAARDQAAREHA).

As to quaternary structure, interacts with ceh-6, sem-4 and sox-2. Interacts with wdr-5.1. In terms of tissue distribution, expression detected in anterior intestine and head region.

It is found in the nucleus. Transcription factor which promotes stress survival and delays aging. Required for cell cycle progression and development of the mesodermal and endodermal embryonic lineages. Required for normal T-cell polarity, for correct migration of QL neuroblast descendants and other cells, for embryonic patterning and for the embryonic expression of hlh-8. Also required for the transdifferentiation of the Y rectal epithelial cell to the PDA motor neuron during larval development. In Caenorhabditis elegans, this protein is Egg-laying defective protein 27.